We begin with the raw amino-acid sequence, 83 residues long: Cytochrome b559 subunit alpha (83 aa).

The helical transmembrane segment at 21–35 threads the bilayer; it reads VIHSITIPSLFIAGW. A heme-binding site is contributed by His-23.

Belongs to the PsbE/PsbF family. Heterodimer of an alpha subunit and a beta subunit. PSII is composed of 1 copy each of membrane proteins PsbA, PsbB, PsbC, PsbD, PsbE, PsbF, PsbH, PsbI, PsbJ, PsbK, PsbL, PsbM, PsbT, PsbX, PsbY, PsbZ, Psb30/Ycf12, at least 3 peripheral proteins of the oxygen-evolving complex and a large number of cofactors. It forms dimeric complexes. Requires heme b as cofactor.

The protein resides in the plastid. It is found in the chloroplast thylakoid membrane. In terms of biological role, this b-type cytochrome is tightly associated with the reaction center of photosystem II (PSII). PSII is a light-driven water:plastoquinone oxidoreductase that uses light energy to abstract electrons from H(2)O, generating O(2) and a proton gradient subsequently used for ATP formation. It consists of a core antenna complex that captures photons, and an electron transfer chain that converts photonic excitation into a charge separation. This is Cytochrome b559 subunit alpha from Tupiella akineta (Green alga).